A 180-amino-acid polypeptide reads, in one-letter code: Acireductone dioxygenase (180 aa).

Residues H97, H99, E103, and H141 each contribute to the Fe(2+) site. H97, H99, E103, and H141 together coordinate Ni(2+).

This sequence belongs to the acireductone dioxygenase (ARD) family. In terms of assembly, monomer. The cofactor is Fe(2+). Ni(2+) is required as a cofactor.

It carries out the reaction 1,2-dihydroxy-5-(methylsulfanyl)pent-1-en-3-one + O2 = 3-(methylsulfanyl)propanoate + CO + formate + 2 H(+). The enzyme catalyses 1,2-dihydroxy-5-(methylsulfanyl)pent-1-en-3-one + O2 = 4-methylsulfanyl-2-oxobutanoate + formate + 2 H(+). It participates in amino-acid biosynthesis; L-methionine biosynthesis via salvage pathway; L-methionine from S-methyl-5-thio-alpha-D-ribose 1-phosphate: step 5/6. Its function is as follows. Catalyzes 2 different reactions between oxygen and the acireductone 1,2-dihydroxy-3-keto-5-methylthiopentene (DHK-MTPene) depending upon the metal bound in the active site. Fe-containing acireductone dioxygenase (Fe-ARD) produces formate and 2-keto-4-methylthiobutyrate (KMTB), the alpha-ketoacid precursor of methionine in the methionine recycle pathway. Ni-containing acireductone dioxygenase (Ni-ARD) produces methylthiopropionate, carbon monoxide and formate, and does not lie on the methionine recycle pathway. This is Acireductone dioxygenase from Yersinia pseudotuberculosis serotype O:1b (strain IP 31758).